A 385-amino-acid chain; its full sequence is Putative ESX-1 scaffolding and assembly protein SaeC (385 aa).

The protein localises to the cytoplasm. In terms of biological role, may be involved in assembly of the ESX-1 / type VII specialized secretion system (T7SS), which exports several proteins including EsxA and EsxB. Involved in DNA conjugation in recipient (MKD8) strain. This Mycolicibacterium smegmatis (strain ATCC 700084 / mc(2)155) (Mycobacterium smegmatis) protein is Putative ESX-1 scaffolding and assembly protein SaeC.